Reading from the N-terminus, the 183-residue chain is ATP synthase subunit b, chloroplastic (183 aa).

A helical membrane pass occupies residues 25 to 45 (DILATNLINLTVVVGVLIFFG).

Belongs to the ATPase B chain family. In terms of assembly, F-type ATPases have 2 components, F(1) - the catalytic core - and F(0) - the membrane proton channel. F(1) has five subunits: alpha(3), beta(3), gamma(1), delta(1), epsilon(1). F(0) has four main subunits: a(1), b(1), b'(1) and c(10-14). The alpha and beta chains form an alternating ring which encloses part of the gamma chain. F(1) is attached to F(0) by a central stalk formed by the gamma and epsilon chains, while a peripheral stalk is formed by the delta, b and b' chains.

The protein localises to the plastid. Its subcellular location is the chloroplast thylakoid membrane. F(1)F(0) ATP synthase produces ATP from ADP in the presence of a proton or sodium gradient. F-type ATPases consist of two structural domains, F(1) containing the extramembraneous catalytic core and F(0) containing the membrane proton channel, linked together by a central stalk and a peripheral stalk. During catalysis, ATP synthesis in the catalytic domain of F(1) is coupled via a rotary mechanism of the central stalk subunits to proton translocation. Its function is as follows. Component of the F(0) channel, it forms part of the peripheral stalk, linking F(1) to F(0). The polypeptide is ATP synthase subunit b, chloroplastic (Sorghum bicolor (Sorghum)).